We begin with the raw amino-acid sequence, 367 residues long: Flagellar P-ring protein (367 aa).

The first 21 residues, 1–21 (MKIIQTFFIITLLWLSQGVQA), serve as a signal peptide directing secretion.

It belongs to the FlgI family. In terms of assembly, the basal body constitutes a major portion of the flagellar organelle and consists of four rings (L,P,S, and M) mounted on a central rod.

Its subcellular location is the periplasm. The protein localises to the bacterial flagellum basal body. Its function is as follows. Assembles around the rod to form the L-ring and probably protects the motor/basal body from shearing forces during rotation. This chain is Flagellar P-ring protein, found in Nitrosococcus oceani (strain ATCC 19707 / BCRC 17464 / JCM 30415 / NCIMB 11848 / C-107).